Consider the following 473-residue polypeptide: Photosystem II CP43 reaction center protein (473 aa).

A propeptide spanning residues 1-14 is cleaved from the precursor; that stretch reads MKTLYSLRRFYPVE. Residue Thr-15 is modified to N-acetylthreonine. Phosphothreonine is present on Thr-15. Helical transmembrane passes span 69-93, 134-155, 178-200, 255-275, and 291-312; these read LFEV…PHLA, LLGP…KDRN, KALY…RKIT, KPFA…LSYS, and WFNN…ASQA. Residue Glu-367 coordinates [CaMn4O5] cluster. Positions 426 to 473 are excised as a propeptide; the sequence is LSTSHFVLGFFLFVGHLWHAGRARAAAAGFEKGIDRDFEPVLSMTPLN. The chain crosses the membrane as a helical span at residues 447–471; it reads RARAAAAGFEKGIDRDFEPVLSMTP.

The protein belongs to the PsbB/PsbC family. PsbC subfamily. PSII is composed of 1 copy each of membrane proteins PsbA, PsbB, PsbC, PsbD, PsbE, PsbF, PsbH, PsbI, PsbJ, PsbK, PsbL, PsbM, PsbT, PsbX, PsbY, PsbZ, Psb30/Ycf12, at least 3 peripheral proteins of the oxygen-evolving complex and a large number of cofactors. It forms dimeric complexes. Binds multiple chlorophylls and provides some of the ligands for the Ca-4Mn-5O cluster of the oxygen-evolving complex. It may also provide a ligand for a Cl- that is required for oxygen evolution. PSII binds additional chlorophylls, carotenoids and specific lipids. is required as a cofactor. Over time a tryptophan in the fifth lumenal loop is converted to 2-hydroxy-2,3-dihydrotryptophan, 2-oxo-2,3-dihydrotryptophan, and kynurenine by oxidizing species from the active site. This oxidation targets the protein for turnover.

It is found in the plastid. The protein resides in the chloroplast thylakoid membrane. Its function is as follows. One of the components of the core complex of photosystem II (PSII). It binds chlorophyll and helps catalyze the primary light-induced photochemical processes of PSII. PSII is a light-driven water:plastoquinone oxidoreductase, using light energy to abstract electrons from H(2)O, generating O(2) and a proton gradient subsequently used for ATP formation. The protein is Photosystem II CP43 reaction center protein of Spinacia oleracea (Spinach).